A 162-amino-acid polypeptide reads, in one-letter code: 2-C-methyl-D-erythritol 2,4-cyclodiphosphate synthase (162 aa).

Residues D12 and H14 each contribute to the a divalent metal cation site. Residues 12–14 (DVH) and 38–39 (HS) contribute to the 4-CDP-2-C-methyl-D-erythritol 2-phosphate site. H46 is an a divalent metal cation binding site. Residues 60-62 (DIG), 65-69 (FPDTD), and R146 each bind 4-CDP-2-C-methyl-D-erythritol 2-phosphate.

This sequence belongs to the IspF family. In terms of assembly, homotrimer. It depends on a divalent metal cation as a cofactor.

It carries out the reaction 4-CDP-2-C-methyl-D-erythritol 2-phosphate = 2-C-methyl-D-erythritol 2,4-cyclic diphosphate + CMP. Its pathway is isoprenoid biosynthesis; isopentenyl diphosphate biosynthesis via DXP pathway; isopentenyl diphosphate from 1-deoxy-D-xylulose 5-phosphate: step 4/6. In terms of biological role, involved in the biosynthesis of isopentenyl diphosphate (IPP) and dimethylallyl diphosphate (DMAPP), two major building blocks of isoprenoid compounds. Catalyzes the conversion of 4-diphosphocytidyl-2-C-methyl-D-erythritol 2-phosphate (CDP-ME2P) to 2-C-methyl-D-erythritol 2,4-cyclodiphosphate (ME-CPP) with a corresponding release of cytidine 5-monophosphate (CMP). This Bordetella bronchiseptica (strain ATCC BAA-588 / NCTC 13252 / RB50) (Alcaligenes bronchisepticus) protein is 2-C-methyl-D-erythritol 2,4-cyclodiphosphate synthase.